The sequence spans 106 residues: NADH-quinone oxidoreductase subunit K (106 aa).

Transmembrane regions (helical) follow at residues 10 to 30, 34 to 54, and 67 to 87; these read VTYI…GVLI, IVII…VFVT, and IVFF…ALVI.

It belongs to the complex I subunit 4L family. As to quaternary structure, NDH-1 is composed of 14 different subunits. Subunits NuoA, H, J, K, L, M, N constitute the membrane sector of the complex.

It is found in the cell inner membrane. The enzyme catalyses a quinone + NADH + 5 H(+)(in) = a quinol + NAD(+) + 4 H(+)(out). Its function is as follows. NDH-1 shuttles electrons from NADH, via FMN and iron-sulfur (Fe-S) centers, to quinones in the respiratory chain. The immediate electron acceptor for the enzyme in this species is believed to be ubiquinone. Couples the redox reaction to proton translocation (for every two electrons transferred, four hydrogen ions are translocated across the cytoplasmic membrane), and thus conserves the redox energy in a proton gradient. The polypeptide is NADH-quinone oxidoreductase subunit K (Leptospira biflexa serovar Patoc (strain Patoc 1 / Ames)).